Consider the following 1384-residue polypeptide: Hepatocyte growth factor receptor (1384 aa).

An N-terminal signal peptide occupies residues M1–G24. Over E25–T933 the chain is Extracellular. The 490-residue stretch at K27 to L516 folds into the Sema domain. N45 carries an N-linked (GlcNAc...) asparagine glycan. 4 disulfides stabilise this stretch: C95-C101, C98-C160, C133-C141, and C173-C176. A glycan (N-linked (GlcNAc...) asparagine) is linked at N106. N-linked (GlcNAc...) asparagine glycosylation is present at N149. N-linked (GlcNAc...) asparagine glycans are attached at residues N203 and N359. 2 cysteine pairs are disulfide-bonded: C299/C364 and C386/C398. N400 and N406 each carry an N-linked (GlcNAc...) asparagine glycan. 4 disulfide bridges follow: C521/C539, C527/C562, C530/C546, and C542/C552. IPT/TIG domains are found at residues P564–V656, P658–R740, and P743–V837. T583 carries O-linked (Man) threonine glycosylation. N-linked (GlcNAc...) asparagine glycans are attached at residues N608 and N636. 2 O-linked (Man) threonine glycosylation sites follow: T677 and T762. N-linked (GlcNAc...) asparagine glycans are attached at residues N786, N880, and N931. The helical transmembrane segment at G934–L956 threads the bilayer. At K957 to T1384 the chain is on the cytoplasmic side. Position 967 is a phosphoserine (S967). T978 carries the phosphothreonine modification. Phosphoserine is present on residues S991, S998, and S1001. Y1004 is modified (phosphotyrosine). The Protein kinase domain maps to V1079 to I1346. Residues I1085–V1093 and K1111 each bind ATP. Residue D1205 is the Proton acceptor of the active site. Residues L1213–D1382 form an interaction with RANBP9 region. A Phosphotyrosine modification is found at Y1231. Phosphotyrosine; by autocatalysis occurs at positions 1235 and 1236. Residue T1290 is modified to Phosphothreonine. Residues W1321–V1360 are interaction with MUC20. Phosphotyrosine; by autocatalysis occurs at positions 1350 and 1357. Y1366 carries the post-translational modification Phosphotyrosine.

This sequence belongs to the protein kinase superfamily. Tyr protein kinase family. In terms of assembly, heterodimer made of an alpha chain (50 kDa) and a beta chain (145 kDa) which are disulfide linked. Binds PLXNB1. Interacts when phosphorylated with downstream effectors including STAT3, PIK3R1, SRC, PCLG1, GRB2 and GAB1. Interacts with SPSB1, SPSB2 and SPSB4. Interacts with INPP5D/SHIP1. When phosphorylated at Tyr-1357, interacts with INPPL1/SHIP2. Interacts with RANBP9 and RANBP10, as well as SPSB1, SPSB2, SPSB3 and SPSB4. SPSB1 binding occurs in the presence and in the absence of HGF, however HGF treatment has a positive effect on this interaction. Interacts with MUC20; prevents interaction with GRB2 and suppresses hepatocyte growth factor-induced cell proliferation. Interacts with GRB10. Interacts with PTPN1 and PTPN2. Interacts with HSP90AA1 and HSP90AB1; the interaction suppresses MET kinase activity. Interacts with tensin TNS3. Interacts (when phosphorylated) with tensin TNS4 (via SH2 domain); the interaction increases MET protein stability by inhibiting MET endocytosis and subsequent lysosomal degradation. Post-translationally, autophosphorylated in response to ligand binding on Tyr-1235 and Tyr-1236 in the kinase domain leading to further phosphorylation of Tyr-1350 and Tyr-1357 in the C-terminal multifunctional docking site. Dephosphorylated by PTPRJ at Tyr-1350 and Tyr-1366. Dephosphorylated by PTPN1 and PTPN2. Ubiquitinated. Ubiquitination by CBL regulates the receptor stability and activity through proteasomal degradation. In terms of processing, O-mannosylation of IPT/TIG domains by TMEM260 is required for protein maturation. O-mannosylated residues are composed of single mannose glycans that are not elongated or modified.

It localises to the membrane. It carries out the reaction L-tyrosyl-[protein] + ATP = O-phospho-L-tyrosyl-[protein] + ADP + H(+). With respect to regulation, in its inactive state, the C-terminal tail interacts with the catalytic domain and inhibits the kinase activity. Upon ligand binding, the C-terminal tail is displaced and becomes phosphorylated, thus increasing the kinase activity. Receptor tyrosine kinase that transduces signals from the extracellular matrix into the cytoplasm by binding to hepatocyte growth factor/HGF ligand. Regulates many physiological processes including proliferation, scattering, morphogenesis and survival. Ligand binding at the cell surface induces autophosphorylation of MET on its intracellular domain that provides docking sites for downstream signaling molecules. Following activation by ligand, interacts with the PI3-kinase subunit PIK3R1, PLCG1, SRC, GRB2, STAT3 or the adapter GAB1. Recruitment of these downstream effectors by MET leads to the activation of several signaling cascades including the RAS-ERK, PI3 kinase-AKT, or PLCgamma-PKC. The RAS-ERK activation is associated with the morphogenetic effects while PI3K/AKT coordinates prosurvival effects. During embryonic development, MET signaling plays a role in gastrulation, development and migration of muscles and neuronal precursors, angiogenesis and kidney formation. In adults, participates in wound healing as well as organ regeneration and tissue remodeling. Also promotes differentiation and proliferation of hematopoietic cells. The chain is Hepatocyte growth factor receptor (MET) from Ovis aries (Sheep).